The sequence spans 120 residues: Cell cycle protein GpsB (120 aa).

A coiled-coil region spans residues 32–68 (LDDIIKDYETYAALVKELREENRRLKEELAAKPVEKA). Residues 63–88 (KPVEKAPVQPTQPVQSTQATQSTVES) are disordered. Low complexity predominate over residues 68 to 86 (APVQPTQPVQSTQATQSTV).

The protein belongs to the GpsB family. In terms of assembly, forms polymers through the coiled coil domains. Interacts with PBP1, MreC and EzrA.

Its subcellular location is the cytoplasm. Its function is as follows. Divisome component that associates with the complex late in its assembly, after the Z-ring is formed, and is dependent on DivIC and PBP2B for its recruitment to the divisome. Together with EzrA, is a key component of the system that regulates PBP1 localization during cell cycle progression. Its main role could be the removal of PBP1 from the cell pole after pole maturation is completed. Also contributes to the recruitment of PBP1 to the division complex. Not essential for septum formation. The sequence is that of Cell cycle protein GpsB from Streptococcus sanguinis (strain SK36).